The sequence spans 420 residues: Probable protein phosphatase 2C 73 (420 aa).

Positions 33–336 (GVSMHTKQGW…DDCAVVCLFL (304 aa)) constitute a PPM-type phosphatase domain. The Mn(2+) site is built by aspartate 69 and glycine 70. Residues 96 to 105 (LKTEQDPSSN) are compositionally biased toward polar residues. The segment at 96-119 (LKTEQDPSSNTDKETLEKSDCTSL) is disordered. The span at 106–115 (TDKETLEKSD) shows a compositional bias: basic and acidic residues. Mn(2+) contacts are provided by aspartate 281 and aspartate 327.

This sequence belongs to the PP2C family. It depends on Mg(2+) as a cofactor. Requires Mn(2+) as cofactor.

The catalysed reaction is O-phospho-L-seryl-[protein] + H2O = L-seryl-[protein] + phosphate. The enzyme catalyses O-phospho-L-threonyl-[protein] + H2O = L-threonyl-[protein] + phosphate. The sequence is that of Probable protein phosphatase 2C 73 from Oryza sativa subsp. japonica (Rice).